Here is a 301-residue protein sequence, read N- to C-terminus: Glutamine amidotransferase-like protein GlxB (301 aa).

C2 is a catalytic residue. The 297-residue stretch at 2–298 (CGIVGLFLKD…PATVYFWDHQ (297 aa)) folds into the Glutamine amidotransferase type-2 domain.

The sequence is that of Glutamine amidotransferase-like protein GlxB (glxB) from Rhizobium meliloti (strain 1021) (Ensifer meliloti).